A 505-amino-acid chain; its full sequence is Lysine--tRNA ligase (505 aa).

Residues Glu-415 and Glu-422 each coordinate Mg(2+).

Belongs to the class-II aminoacyl-tRNA synthetase family. As to quaternary structure, homodimer. It depends on Mg(2+) as a cofactor.

It localises to the cytoplasm. The catalysed reaction is tRNA(Lys) + L-lysine + ATP = L-lysyl-tRNA(Lys) + AMP + diphosphate. The polypeptide is Lysine--tRNA ligase (Xanthomonas campestris pv. campestris (strain 8004)).